The following is a 396-amino-acid chain: Pyruvate dehydrogenase E1 component subunit alpha type I, mitochondrial (396 aa).

A mitochondrion-targeting transit peptide spans 1–25 (MIFVFANIFKVPTVSPSVMAISVRL). Residues His-88, Tyr-114, Arg-115, Gly-153, Gly-161, Val-163, Asp-192, Gly-193, Ala-194, Asn-221, and Tyr-223 each contribute to the pyruvate site. 2 residues coordinate thiamine diphosphate: Tyr-114 and Arg-115. The thiamine diphosphate site is built by Gly-161, Val-163, Asp-192, Gly-193, Ala-194, and Asn-221. Asp-192 is a Mg(2+) binding site. Mg(2+) is bound by residues Asn-221 and Tyr-223. His-288 contacts thiamine diphosphate. A phosphoserine mark is found at Ser-289 and Ser-296.

In terms of assembly, heterotetramer of two PDHA1 and two PDHB subunits. The heterotetramer interacts with DLAT, and is part of the multimeric pyruvate dehydrogenase complex that contains multiple copies of pyruvate dehydrogenase (E1), dihydrolipoamide acetyltransferase (DLAT, E2) and lipoamide dehydrogenase (DLD, E3). Thiamine diphosphate is required as a cofactor. The cofactor is Mg(2+).

The protein resides in the mitochondrion matrix. It catalyses the reaction N(6)-[(R)-lipoyl]-L-lysyl-[protein] + pyruvate + H(+) = N(6)-[(R)-S(8)-acetyldihydrolipoyl]-L-lysyl-[protein] + CO2. Its activity is regulated as follows. Pyruvate dehydrogenase activity is inhibited by phosphorylation of PDHA1; it is reactivated by dephosphorylation. In terms of biological role, the pyruvate dehydrogenase complex catalyzes the overall conversion of pyruvate to acetyl-CoA and CO(2), and thereby links the glycolytic pathway to the tricarboxylic cycle. The polypeptide is Pyruvate dehydrogenase E1 component subunit alpha type I, mitochondrial (Ascaris suum (Pig roundworm)).